The chain runs to 947 residues: Translation initiation factor IF-2 (947 aa).

Residues Leu47–Arg332 are disordered. Basic and acidic residues predominate over residues Ala86–Leu95. The segment covering Ala105–Ala123 has biased composition (pro residues). A compositionally biased stretch (low complexity) spans Ala131–Ala145. Composition is skewed to pro residues over residues Pro146–Pro171 and Pro210–Pro225. The segment covering Arg255–Gly318 has biased composition (gly residues). Basic residues predominate over residues Arg322–Lys331. The tr-type G domain maps to Thr443–Leu614. The tract at residues Gly452 to Thr459 is G1. Residue Gly452–Thr459 participates in GTP binding. Residues Gly477–His481 are G2. Residues Asp502–Gly505 are G3. Residues Asp502 to His506 and Asn556 to Asp559 contribute to the GTP site. The tract at residues Asn556 to Asp559 is G4. The interval Ser592–Lys594 is G5.

Belongs to the TRAFAC class translation factor GTPase superfamily. Classic translation factor GTPase family. IF-2 subfamily.

The protein localises to the cytoplasm. One of the essential components for the initiation of protein synthesis. Protects formylmethionyl-tRNA from spontaneous hydrolysis and promotes its binding to the 30S ribosomal subunits. Also involved in the hydrolysis of GTP during the formation of the 70S ribosomal complex. The polypeptide is Translation initiation factor IF-2 (Mycobacterium marinum (strain ATCC BAA-535 / M)).